The chain runs to 476 residues: MSIQTSDPNDPNGSLKSLSLIAAHSHITGLGLDDNLQPRASSEGMVGQLQARRAAGVILRMIQNGSIAGRAILVAGPPSTGKTALAMGLSQSLGKDVPFTAITGSEIFSLELSKTEALTQAFRKSIGIKIKEETELIEGEVVEIQIDRSITGGHKQGKLTIKTTDMETIYELGNKMIDGLTKEKVLAGDVISIDKASGKITKLGRSFARSRDYDAMGYDTKFVQCPEGELQKRKTVVHTVSLHEIDVINSRTQGFLALFTGDTGEIRSEVRDQINTKVAEWKEEGKAEIVPGVLFIDEVHMLDIECFSFINRALEDEFAPIIMMATNRGISKTRGTNYKSPHGLPLDLLDRSIIITTSNYNEEEIKTILTIRAQEEEVELSPDALDLLTKTGGETSLRYSSNLISVAQQIALKRKSNTVEVADVKKAYLLFLDSSRSVKFVQENQDQYIDDNGKVIISTSGEMTQPADGEAMDTTE.

An ATP-binding site is contributed by glycine 76–threonine 83.

The protein belongs to the RuvB family. In terms of assembly, may form heterododecamers with RVB1. Component of the SWR1 chromatin remodeling complex, the INO80 chromatin remodeling complex, and of the R2TP complex.

The protein localises to the nucleus. The enzyme catalyses ATP + H2O = ADP + phosphate + H(+). Functionally, DNA helicase which participates in several chromatin remodeling complexes, including the SWR1 and the INO80 complexes. The SWR1 complex mediates the ATP-dependent exchange of histone H2A for the H2A variant HZT1 leading to transcriptional regulation of selected genes by chromatin remodeling. The INO80 complex remodels chromatin by shifting nucleosomes and is involved in DNA repair. Also involved in pre-rRNA processing. In Candida glabrata (strain ATCC 2001 / BCRC 20586 / JCM 3761 / NBRC 0622 / NRRL Y-65 / CBS 138) (Yeast), this protein is RuvB-like helicase 2 (RVB2).